Here is a 333-residue protein sequence, read N- to C-terminus: Probable malate dehydrogenase 3 (333 aa).

12–18 (GAAGQIA) lines the NAD(+) pocket. Residues Arg-93 and Arg-99 each coordinate substrate. NAD(+) is bound by residues Asn-106, Gln-113, and 130 to 132 (VGN). 2 residues coordinate substrate: Asn-132 and Arg-163. His-188 functions as the Proton acceptor in the catalytic mechanism.

It belongs to the LDH/MDH superfamily. MDH type 2 family. Homodimer.

The catalysed reaction is (S)-malate + NAD(+) = oxaloacetate + NADH + H(+). Its function is as follows. Catalyzes the reversible oxidation of malate to oxaloacetate. The sequence is that of Probable malate dehydrogenase 3 (mdhC) from Dictyostelium discoideum (Social amoeba).